A 616-amino-acid chain; its full sequence is Dihydroxy-acid dehydratase (616 aa).

Aspartate 81 lines the Mg(2+) pocket. Residue cysteine 122 coordinates [2Fe-2S] cluster. Aspartate 123 and lysine 124 together coordinate Mg(2+). Position 124 is an N6-carboxylysine (lysine 124). Cysteine 195 contributes to the [2Fe-2S] cluster binding site. Glutamate 491 serves as a coordination point for Mg(2+). Serine 517 acts as the Proton acceptor in catalysis.

It belongs to the IlvD/Edd family. In terms of assembly, homodimer. It depends on [2Fe-2S] cluster as a cofactor. Mg(2+) serves as cofactor.

It carries out the reaction (2R)-2,3-dihydroxy-3-methylbutanoate = 3-methyl-2-oxobutanoate + H2O. The enzyme catalyses (2R,3R)-2,3-dihydroxy-3-methylpentanoate = (S)-3-methyl-2-oxopentanoate + H2O. It participates in amino-acid biosynthesis; L-isoleucine biosynthesis; L-isoleucine from 2-oxobutanoate: step 3/4. The protein operates within amino-acid biosynthesis; L-valine biosynthesis; L-valine from pyruvate: step 3/4. Functions in the biosynthesis of branched-chain amino acids. Catalyzes the dehydration of (2R,3R)-2,3-dihydroxy-3-methylpentanoate (2,3-dihydroxy-3-methylvalerate) into 2-oxo-3-methylpentanoate (2-oxo-3-methylvalerate) and of (2R)-2,3-dihydroxy-3-methylbutanoate (2,3-dihydroxyisovalerate) into 2-oxo-3-methylbutanoate (2-oxoisovalerate), the penultimate precursor to L-isoleucine and L-valine, respectively. This chain is Dihydroxy-acid dehydratase, found in Blochmanniella pennsylvanica (strain BPEN).